The sequence spans 82 residues: Small ribosomal subunit protein bS18 (82 aa).

Belongs to the bacterial ribosomal protein bS18 family. In terms of assembly, part of the 30S ribosomal subunit. Forms a tight heterodimer with protein bS6.

Its function is as follows. Binds as a heterodimer with protein bS6 to the central domain of the 16S rRNA, where it helps stabilize the platform of the 30S subunit. The chain is Small ribosomal subunit protein bS18 from Bifidobacterium longum (strain NCC 2705).